The chain runs to 318 residues: Glutathione synthetase (318 aa).

The region spanning 129–314 is the ATP-grasp domain; it reads KLAITEFPDL…VPEMFAVALE (186 aa). ATP is bound at residue 155–211; it reads HAAQGDVIVKPLDGMGGTGIFRLQRSEPNLNAILETLTDNGTRTIMAQRYIPEIVKG. Residues Glu285 and Asn287 each contribute to the Mg(2+) site.

Belongs to the prokaryotic GSH synthase family. The cofactor is Mg(2+). Requires Mn(2+) as cofactor.

It catalyses the reaction gamma-L-glutamyl-L-cysteine + glycine + ATP = glutathione + ADP + phosphate + H(+). It participates in sulfur metabolism; glutathione biosynthesis; glutathione from L-cysteine and L-glutamate: step 2/2. In Bordetella bronchiseptica (strain ATCC BAA-588 / NCTC 13252 / RB50) (Alcaligenes bronchisepticus), this protein is Glutathione synthetase.